A 497-amino-acid polypeptide reads, in one-letter code: Bypass of stop codon protein 6 (497 aa).

The Lumenal portion of the chain corresponds to 1–72; the sequence is MDASSVPPKV…KVKTYPLNYQ (72 aa). Ser37 and Ser41 each carry phosphoserine. Asn49 is a glycosylation site (N-linked (GlcNAc...) asparagine). The helical transmembrane segment at 73-93 threads the bilayer; that stretch reads TVPLVKLQVIACLIMFVVFGM. Over 94–144 the chain is Cytoplasmic; it reads NDQTVGALLPTLIEYYHISRVDVSNVFIVQLCGYVMASLSKERLNKHFGMR. A helical transmembrane segment spans residues 145–165; the sequence is GGMLLAAGLCIVFLIILATAP. At 166–167 the chain is on the lumenal side; it reads SS. Residues 168–188 form a helical membrane-spanning segment; the sequence is FYVCMFCGLPLGLGIGILDST. Topologically, residues 189–205 are cytoplasmic; sequence GNVLMGSLLVHKNELMG. The helical transmembrane segment at 206-226 threads the bilayer; that stretch reads IMHGLYGAAAMVTPPLVSYFV. At 227–232 the chain is on the lumenal side; that stretch reads EWGHWS. Residues 233 to 253 traverse the membrane as a helical segment; the sequence is LFFLIPLFFSIIGMIVIFPAF. The Cytoplasmic segment spans residues 254-300; sequence KFETASKYDYLCSVENKESNNDVEEAGDNSLMESTKASPGFFELLRN. A helical membrane pass occupies residues 301–321; the sequence is PAIFLYSLYLFLYLGAEITTG. Residues 322-340 lie on the Lumenal side of the membrane; it reads SWFFSYLLETKSSNKVAMS. Residues 341–361 form a helical membrane-spanning segment; it reads YIAASFWTGLTVGRLCLGFVT. The Cytoplasmic segment spans residues 362 to 373; sequence ERFFENEYKASK. Residues 374 to 394 form a helical membrane-spanning segment; sequence AYAFLTLSSYTLFVLVGLINS. Residues 395–397 lie on the Lumenal side of the membrane; sequence SSV. Residues 398–418 form a helical membrane-spanning segment; sequence FYFVVLFFVVFCCGTFIGPLF. The Cytoplasmic portion of the chain corresponds to 419–439; it reads PNASIVALQVLPKRLHVSGVG. The helical transmembrane segment at 440–460 threads the bilayer; sequence VAVAVGGCGGAAIPYLAGVIA. Over 461 to 462 the chain is Lumenal; sequence HT. A helical transmembrane segment spans residues 463 to 483; it reads VGIQYIPLLCWIMVALFTLEW. The Cytoplasmic portion of the chain corresponds to 484 to 497; it reads TLYPKFIKGHEEYF.

This sequence belongs to the major facilitator superfamily.

It is found in the golgi apparatus. It localises to the cis-Golgi network membrane. Probable transporter. The protein is Bypass of stop codon protein 6 (BSC6) of Saccharomyces cerevisiae (strain ATCC 204508 / S288c) (Baker's yeast).